The primary structure comprises 413 residues: High zinc activated nuclear receptor protein (413 aa).

Residues 11-86 (LGNCKICLQR…EGMKIELVQL (76 aa)) constitute a DNA-binding region (nuclear receptor). 2 NR C4-type zinc fingers span residues 14 to 34 (CKIC…CRAC) and 50 to 69 (CKEK…CRSC). Residues 101–412 (SIDPLFTPNV…TSQCIVHTKN (312 aa)) are required for zinc-binding. Residues 135 to 396 (QMTSGYAMFL…VCCKNFKEDA (262 aa)) form the NR LBD domain.

Belongs to the nuclear hormone receptor family. Weakly expressed in intestinal cells in the absence of zinc supplementation. Upon zinc supplementation, accumulates in alimentary tract cells, and it is mainly expressed in the intestine.

It localises to the nucleus. The protein resides in the cytoplasm. Functionally, nuclear receptor transcription factor that binds to DNA enhancer elements to promote the transcription of genes required to maintain micronutrient homeostasis. Direct binding to its ligand zinc allows for nuclear accumulation and activation, which thereby induces the transcription of genes required to promote the storage and detoxification of excess dietary zinc. This in turn, allows for internal zinc levels to be detected and regulated. This chain is High zinc activated nuclear receptor protein, found in Caenorhabditis elegans.